Here is an 845-residue protein sequence, read N- to C-terminus: MGFLSKIVDGNKKETKRLSKIADEVLSLEEDMAILTDEEIKNKTKQFQQEVQEIEDVKKQNDYLDKILPQAYALVREGAKRVFNMTPYKVQVMGGIAIHKGDIAEMRTGEGKTLTATMPTYLNALAGRGVHVITVNEYLSSVQSEEMAELYEFLGLTVGLNLNSKSTNEKREAYAQDITYSTNNELGFDYLRDNMVNYAEERVMRPLHFAIIDEVDSILIDEARTPLIISGEAEKSTSLYTQANVFAKMLKAEDDYKYDEKTKAVHLTEQGADKAERMFKIENLYDVQNVEVISHINTALKAHVTLQRDVDYMVVDGEVLIVDQFTGRTMPGRRFSEGLHQAIEAKEGVKIQNESKTMASITFQNYFRMYNKLAGMTGTAKTEEEEFRNIYNMTVTQIPTNKPVQRDDKSDLIYISQKGKFDAVVEDVVEKHKQGQPVLLGTVAVETSEYISNLLKKRGIRHDVLNAKNHEREAEIVANAGQKGAVTIATNMAGRGTDIKLGEGVEEIGGLAVIGTERHESRRIDDQLRGRSGRQGDRGDSRFYLSLQDELMVRFGSERLQKMMNRLGMDDSTPIESKMVSRAVESAQKRVEGNNFDARKRILEYDEVLRKQREIIYNERNNIIDSEDSSQLVNAMLRSTLQRGVTYHISEEDDNPDYAPFINYVNDVFLQEGDLKEEEINGKDSEDIFEVVWSKIEKVYESQKAKIGDQMAEFERMILLRSIDTHWTDHIDTMDQLRQGIHLRSYAQQNPLRDYQNEGHELFDMMMQNIEEDTSKFILKSVIQVDENIEREKTTDFGTAQHVSAEDGKEKAKKQPIVKGDKVGRNDPCPCGSGKKYKNCHGKEE.

ATP-binding positions include Gln-91, 109–113 (GEGKT), and Asp-498. The disordered stretch occupies residues 795-845 (TDFGTAQHVSAEDGKEKAKKQPIVKGDKVGRNDPCPCGSGKKYKNCHGKEE). Positions 829, 831, 840, and 841 each coordinate Zn(2+). Basic residues predominate over residues 835–845 (KKYKNCHGKEE).

This sequence belongs to the SecA family. As to quaternary structure, monomer and homodimer. Part of the essential Sec protein translocation apparatus which comprises SecA, SecYEG and auxiliary proteins SecDF. Other proteins may also be involved. Zn(2+) serves as cofactor.

It localises to the cell membrane. The protein resides in the cytoplasm. It catalyses the reaction ATP + H2O + cellular proteinSide 1 = ADP + phosphate + cellular proteinSide 2.. Part of the Sec protein translocase complex. Interacts with the SecYEG preprotein conducting channel. Has a central role in coupling the hydrolysis of ATP to the transfer of proteins into and across the cell membrane, serving as an ATP-driven molecular motor driving the stepwise translocation of polypeptide chains across the membrane. This is Protein translocase subunit SecA 1 from Staphylococcus haemolyticus (strain JCSC1435).